The sequence spans 707 residues: Matrix metalloproteinase-9 (707 aa).

A signal peptide spans 1–19 (MSPRQPLVLALLVLGCCSA). A propeptide spans 20–106 (APRRRQPTLV…PRCGVPDVGK (87 aa)) (activation peptide). N-linked (GlcNAc...) asparagine glycosylation occurs at asparagine 88. The Cysteine switch motif lies at 97–104 (PRCGVPDV). Residue cysteine 99 coordinates Zn(2+). N-linked (GlcNAc...) asparagine glycosylation is found at asparagine 120 and asparagine 127. The Ca(2+) site is built by aspartate 131 and aspartate 165. Histidine 175 and aspartate 177 together coordinate Zn(2+). 4 residues coordinate Ca(2+): aspartate 182, glycine 183, aspartate 185, and leucine 187. Histidine 190 contacts Zn(2+). Positions 197, 199, and 201 each coordinate Ca(2+). Histidine 203 lines the Zn(2+) pocket. Residues aspartate 205, aspartate 206, and glutamate 208 each contribute to the Ca(2+) site. 3 consecutive Fibronectin type-II domains span residues 225 to 273 (ADGA…FCPS), 283 to 331 (ADGK…FCPT), and 342 to 390 (SAGE…FCPD). 6 disulfide bridges follow: cysteine 230/cysteine 256, cysteine 244/cysteine 271, cysteine 288/cysteine 314, cysteine 302/cysteine 329, cysteine 347/cysteine 373, and cysteine 361/cysteine 388. Histidine 401 is a Zn(2+) binding site. Glutamate 402 is a catalytic residue. 2 residues coordinate Zn(2+): histidine 405 and histidine 411. The tract at residues 437–508 (RGIQHLYGPN…ASPSAAPTAS (72 aa)) is disordered. Residues 446 to 467 (NPNPQPPATTTPEPQPTAPPTA) show a composition bias toward pro residues. Residues 481 to 493 (PTTSPTGAPSAGP) are compositionally biased toward low complexity. A disulfide bridge connects residues cysteine 516 and cysteine 704. 4 Hemopexin repeats span residues 518 to 563 (VNVF…WPAL), 564 to 608 (PAKL…GLGP), 610 to 657 (VPHV…FPGV), and 658 to 704 (PLNT…ILHC).

This sequence belongs to the peptidase M10A family. In terms of assembly, exists as monomer or homodimer; disulfide-linked. Also exists as heterodimer with LCN2. Macrophages and transformed cell lines produce only the monomeric form. Interacts with ECM1. The cofactor is Zn(2+). It depends on Ca(2+) as a cofactor. Post-translationally, N- and O-glycosylated. As to expression, osteoclasts.

The protein localises to the secreted. Its subcellular location is the extracellular space. The protein resides in the extracellular matrix. It carries out the reaction Cleavage of gelatin types I and V and collagen types IV and V.. Matrix metalloproteinase that plays an essential role in local proteolysis of the extracellular matrix and in leukocyte migration. Could play a role in bone osteoclastic resorption. Cleaves KiSS1 at a Gly-|-Leu bond. Cleaves NINJ1 to generate the Secreted ninjurin-1 form. Cleaves type IV and type V collagen into large C-terminal three quarter fragments and shorter N-terminal one quarter fragments. Degrades fibronectin but not laminin or Pz-peptide. In Oryctolagus cuniculus (Rabbit), this protein is Matrix metalloproteinase-9.